Consider the following 339-residue polypeptide: Glycerol-3-phosphate dehydrogenase [NAD(P)+] (339 aa).

Positions 11, 12, and 109 each coordinate NADPH. Sn-glycerol 3-phosphate-binding residues include Lys-109, Gly-140, and Ser-142. NADPH is bound at residue Ala-144. The sn-glycerol 3-phosphate site is built by Lys-195, Asp-249, Ser-259, Arg-260, and Asn-261. Lys-195 serves as the catalytic Proton acceptor. Residue Arg-260 coordinates NADPH. Val-284 and Glu-286 together coordinate NADPH.

It belongs to the NAD-dependent glycerol-3-phosphate dehydrogenase family.

It localises to the cytoplasm. The catalysed reaction is sn-glycerol 3-phosphate + NAD(+) = dihydroxyacetone phosphate + NADH + H(+). The enzyme catalyses sn-glycerol 3-phosphate + NADP(+) = dihydroxyacetone phosphate + NADPH + H(+). It functions in the pathway membrane lipid metabolism; glycerophospholipid metabolism. In terms of biological role, catalyzes the reduction of the glycolytic intermediate dihydroxyacetone phosphate (DHAP) to sn-glycerol 3-phosphate (G3P), the key precursor for phospholipid synthesis. The chain is Glycerol-3-phosphate dehydrogenase [NAD(P)+] from Lactobacillus acidophilus (strain ATCC 700396 / NCK56 / N2 / NCFM).